The following is a 902-amino-acid chain: DNA mismatch repair protein MutS (902 aa).

647-654 is a binding site for ATP; it reads GPNMGGKS.

This sequence belongs to the DNA mismatch repair MutS family.

In terms of biological role, this protein is involved in the repair of mismatches in DNA. It is possible that it carries out the mismatch recognition step. This protein has a weak ATPase activity. The polypeptide is DNA mismatch repair protein MutS (Nitrosospira multiformis (strain ATCC 25196 / NCIMB 11849 / C 71)).